The sequence spans 283 residues: Pantothenate synthetase (283 aa).

30 to 37 provides a ligand contact to ATP; sequence MGALHEGH. Histidine 37 acts as the Proton donor in catalysis. (R)-pantoate is bound at residue glutamine 61. A beta-alanine-binding site is contributed by glutamine 61. ATP is bound at residue 150–153; that stretch reads GRKD. (R)-pantoate is bound at residue glutamine 156. Residues valine 179 and 187-190 each bind ATP; that span reads MSSR.

This sequence belongs to the pantothenate synthetase family. In terms of assembly, homodimer.

It localises to the cytoplasm. The enzyme catalyses (R)-pantoate + beta-alanine + ATP = (R)-pantothenate + AMP + diphosphate + H(+). Its pathway is cofactor biosynthesis; (R)-pantothenate biosynthesis; (R)-pantothenate from (R)-pantoate and beta-alanine: step 1/1. Catalyzes the condensation of pantoate with beta-alanine in an ATP-dependent reaction via a pantoyl-adenylate intermediate. The sequence is that of Pantothenate synthetase from Rhodopirellula baltica (strain DSM 10527 / NCIMB 13988 / SH1).